Consider the following 444-residue polypeptide: Phosphoglucosamine mutase (444 aa).

The active-site Phosphoserine intermediate is the S102. Residues S102, D241, D243, and D245 each contribute to the Mg(2+) site. S102 carries the post-translational modification Phosphoserine.

It belongs to the phosphohexose mutase family. The cofactor is Mg(2+). In terms of processing, activated by phosphorylation.

The enzyme catalyses alpha-D-glucosamine 1-phosphate = D-glucosamine 6-phosphate. Its function is as follows. Catalyzes the conversion of glucosamine-6-phosphate to glucosamine-1-phosphate. The polypeptide is Phosphoglucosamine mutase (Glaesserella parasuis serovar 5 (strain SH0165) (Haemophilus parasuis)).